A 114-amino-acid polypeptide reads, in one-letter code: uncharacterized protein (114 aa).

To M.jannaschii MJ0310 and MJ0714.

This is an uncharacterized protein from Methanocaldococcus jannaschii (strain ATCC 43067 / DSM 2661 / JAL-1 / JCM 10045 / NBRC 100440) (Methanococcus jannaschii).